The sequence spans 541 residues: Protein wntless homolog (541 aa).

Topologically, residues 1 to 15 (MAGAIIENMSTKKLC) are cytoplasmic. A helical membrane pass occupies residues 16–36 (IVGGILLVFQIIAFLVGGLIA). Residues 37-232 (PGPTTAVSYM…GIHQNGGFTK (196 aa)) are Lumenal-facing. Residues 101-232 (MEMSPWFQFM…GIHQNGGFTK (132 aa)) are interaction with Wnt proteins. Residues 233–253 (VWFAMKTFLTPSIFIIMVWYW) form a helical membrane-spanning segment. Residues 254-268 (RRITMMSRPPVLLEK) are Cytoplasmic-facing. A helical transmembrane segment spans residues 269-289 (VIFALGISMTFINIPVEWFSI). The Lumenal segment spans residues 290–303 (GFDWTWMLLFGDIR). Residues 304 to 324 (QGIFYAMLLSFWIIFCGEHMM) traverse the membrane as a helical segment. At 325–331 (DQHERNH) the chain is on the cytoplasmic side. A helical transmembrane segment spans residues 332–352 (IAGYWKQVGPIAVGSFCLFIF). At 353-380 (DMCERGVQLTNPFYSIWTTDIGTELAMA) the chain is on the lumenal side. A helical membrane pass occupies residues 381 to 401 (FIIVAGICLCLYFLFLCFMVF). The Cytoplasmic portion of the chain corresponds to 402–431 (QVFRNISGKQSSLPAMSKVRRLHYEGLIFR). The helical transmembrane segment at 432–452 (FKFLMLITLACAAMTVIFFIV) threads the bilayer. At 453–471 (SQVTEGHWKWGGVTVQVNS) the chain is on the lumenal side. The chain crosses the membrane as a helical span at residues 472–492 (AFFTGIYGMWNLYVFALMFLY). Topologically, residues 493–541 (APSHKNYGEDQSNGDLGVHSGEELQLTTTITHVDGPTEIYKLTRKEAQE) are cytoplasmic.

This sequence belongs to the wntless family. In terms of assembly, interacts with WNT3A. Interacts with WNT1, WNT3 and WNT5A. Post-translationally, N-glycosylated.

The protein localises to the golgi apparatus membrane. Its subcellular location is the cytoplasmic vesicle membrane. The protein resides in the cell membrane. It localises to the endoplasmic reticulum membrane. It is found in the early endosome membrane. Regulates Wnt proteins sorting and secretion in a feedback regulatory mechanism. This reciprocal interaction plays a key role in the regulation of expression, subcellular location, binding and organelle-specific association of Wnt proteins. Plays also an important role in establishment of the anterior-posterior body axis formation during development. This is Protein wntless homolog (WLS) from Homo sapiens (Human).